A 447-amino-acid chain; its full sequence is METQQIKETIEMISEENLDIRTITMGISLLDCVTGDLQTTADKVYAKIMAKAANLVPVADAISDEYGIPIVNKRISVTPVSLLAGADQNLDFRPIAQAMDRAAKDLGVDLIGGYTALVQNGSTPAETALMKSLPEVLDTTERVCASVNIGSTRSGLNMDAVKLMGTVVKEVAMRKPQNAMKLVVFCNAVEDNPFMAGAFWGISEGDVAINTGVSGPGVVERAIAAKPAASFEEICETIKQTAFKVSRMGQFVGKVAADRLDVPFNIVDLSLAPTPAKGDSVAQILETMGLSHVGTPGTTAALALLNDAVKKGGIMAAERVGGLSGAFIPVSEDANMITAAAKGQISLEKLEAMTAVCSVGLDMVAVPGDTPDATISGMIADEAAIGMINNKTTAVRVIPVPGKQVGDIVEFGGIFGTAPIMAINDGDAQQFINRGGRIPAPIHSFKN.

It belongs to the UPF0210 family. In terms of assembly, homodimer.

This is UPF0210 protein LSEI_0897 from Lacticaseibacillus paracasei (strain ATCC 334 / BCRC 17002 / CCUG 31169 / CIP 107868 / KCTC 3260 / NRRL B-441) (Lactobacillus paracasei).